A 488-amino-acid chain; its full sequence is UDP-GalNAc:beta-1,3-N-acetylgalactosaminyltransferase 2 (488 aa).

Topologically, residues 1–2 are cytoplasmic; the sequence is MR. Residues 3-23 traverse the membrane as a helical; Signal-anchor for type II membrane protein segment; that stretch reads HLLLLFLCPCAIGVAFHLWLF. N-linked (GlcNAc...) asparagine glycans are attached at residues Asn-24, Asn-105, and Asn-162. Over 24-488 the chain is Lumenal; the sequence is NFSGLFTWFP…CGNPCACEDR (465 aa).

The protein belongs to the glycosyltransferase 31 family.

The protein localises to the golgi apparatus membrane. Its subcellular location is the endoplasmic reticulum. The catalysed reaction is 3-O-(N-acetyl-beta-D-glucosaminyl-(1-&gt;4)-alpha-D-mannosyl)-L-threonyl-[protein] + UDP-N-acetyl-alpha-D-galactosamine = 3-O-[beta-D-GalNAc-(1-&gt;3)-beta-D-GlcNAc-(1-&gt;4)-alpha-D-Man]-L-Thr-[protein] + UDP + H(+). It functions in the pathway protein modification; protein glycosylation. Functionally, beta-1,3-N-acetylgalactosaminyltransferase that synthesizes a unique carbohydrate structure, GalNAc-beta-1-3GlcNAc, on N- and O-glycans. Has no galactose nor galactosaminyl transferase activity toward any acceptor substrate. Involved in alpha-dystroglycan (dag1) glycosylation. The sequence is that of UDP-GalNAc:beta-1,3-N-acetylgalactosaminyltransferase 2 (b3galnt2) from Xenopus tropicalis (Western clawed frog).